The sequence spans 510 residues: NAD(P)H-quinone oxidoreductase subunit 2 A, chloroplastic (510 aa).

Transmembrane regions (helical) follow at residues 24–44 (LLLFDGSLIFPECILIFGLIL), 57–77 (IPWLYFISSTSLVMSITALLF), 99–119 (IFQFLILLCSTLCIPLSVEYI), 124–144 (MAITEFLLFVLTATLGGMFLC), 149–169 (LITIFVAPECFSLCSYLLSGY), 183–203 (YLLMGGASSSILVHGFSWLYG), 227–247 (PGISIALIFITVGIGFKLSPA), 295–315 (WHLLLEILAILSMILGNLIAI), 323–343 (MLAYSSIGQIGYVIIGIIVGD), 354–374 (YMLFYISMNLGTFACIVLFGL), 395–415 (ALSLALCLLSLGGLPPLAGFF), 418–438 (LYLFWCGWQAGLYFLVLIGLL), and 484–504 (MIVCVIASTIPGISMNPIIAI).

It belongs to the complex I subunit 2 family. NDH is composed of at least 16 different subunits, 5 of which are encoded in the nucleus.

The protein resides in the plastid. It is found in the chloroplast thylakoid membrane. The enzyme catalyses a plastoquinone + NADH + (n+1) H(+)(in) = a plastoquinol + NAD(+) + n H(+)(out). It catalyses the reaction a plastoquinone + NADPH + (n+1) H(+)(in) = a plastoquinol + NADP(+) + n H(+)(out). Its function is as follows. NDH shuttles electrons from NAD(P)H:plastoquinone, via FMN and iron-sulfur (Fe-S) centers, to quinones in the photosynthetic chain and possibly in a chloroplast respiratory chain. The immediate electron acceptor for the enzyme in this species is believed to be plastoquinone. Couples the redox reaction to proton translocation, and thus conserves the redox energy in a proton gradient. This chain is NAD(P)H-quinone oxidoreductase subunit 2 A, chloroplastic, found in Solanum bulbocastanum (Wild potato).